Reading from the N-terminus, the 145-residue chain is Cell wall teichoic acid glycosylation protein GtcA (145 aa).

4 helical membrane-spanning segments follow: residues 21-41 (ILMY…TFWL), 52-69 (IANT…YFSN), 96-116 (FLTY…LGIN), and 121-141 (KIWT…WIIF).

It belongs to the GtrA family.

The protein localises to the cell membrane. Its function is as follows. Involved in the decoration of cell wall teichoic acid with galactose and glucose. The chain is Cell wall teichoic acid glycosylation protein GtcA (gtcA) from Listeria innocua serovar 6a (strain ATCC BAA-680 / CLIP 11262).